We begin with the raw amino-acid sequence, 327 residues long: MGRDQVSHKRSQNSNVSEIPDLDSSLHRSEDTLVAEIIEAMTLAGVCVVRNLFTKSLVDQVLKDFEPHVSSTKLFDGYPGNGCHLTGLLSKSEIYAHMVVGNSVFEKVRNHFLSTTFRSWIGGKMMTFTSPPQLDSTICSYINPQSPGEHLHRDDAIHYGWNEAASEYTVGRDISMSMFLALTESTRENGTTRFFPGSHLWDYSQDFPSADDTRIRYAELHPGDCYFMLSSVTHSSTDNRSTNRPRVLAATIVTRSHLRQEENQYLTYDPITVGRFPTWLQRLVGYAPSAPFLGWVDKRDPRCVIDPKAADDHCGGEYYETNEETLN.

The tract at residues 1–22 (MGRDQVSHKRSQNSNVSEIPDL) is disordered. Residues His-152, Asp-154, and His-234 each contribute to the Fe cation site.

This sequence belongs to the PhyH family. In terms of assembly, homodimer. Fe cation serves as cofactor.

It catalyses the reaction fumigatonoid B = fumigatonoid C. The protein operates within secondary metabolite biosynthesis; terpenoid biosynthesis. In terms of biological role, fumigatonoid B endoperoxide isomerase; part of the gene cluster that mediates the biosynthesis of novofumigatonin, a heavily oxygenated meroterpenoid containing a unique orthoester moiety. The first step of the pathway is the synthesis of 3,5-dimethylorsellinic acid (DMOA) by the polyketide synthase nvfA via condensation of one acetyl-CoA starter unit with 3 malonyl-CoA units and 2 methylations. DMOA is then converted to farnesyl-DMOA by the farnesyltransferase nvfB. Epoxydation by FAD-dependent monooxygenase nvfK, followed by a protonation-initiated cyclization catalyzed by the terpene cyclase nvfL leads to the production of asnavolin H. The short chain dehydrogenase nvfC then as a 3-OH dehydrogenase of asnovolin H to yield chemesin D. There are two branches to synthesize asnovolin A from chemesin D. In one branch, chemesin D undergoes Baeyer-Villiger oxidation by nvfH, methylation by nvfJ, and enoyl reduction by the nvfM D enoylreductase that reduces the double bond between C-5'and C-6', to form respectively asnovolin I, asnovolin K, and asnovolin A. In the other branch, the methylation precedes the Baeyer-Villiger oxidation and the enoyl reduction to yield asnovolin A via the asnovolin J intermediate. Asnovolin A is further converted to fumigatonoid A by the Fe(II)/2-oxoglutarate-dependent dioxygenase nvfI that catalyzes an endoperoxidation reaction. The alpha/beta hydrolase nvfD then acts as an epimerase that converts fumigatonoid A to its C-5' epimer, which then undergoes spontaneous or nvfD-catalyzed lactonization. The following step utilizes the ketoreductase nvfG to produce fumigatonoid B. The dioxygenase nvfE further converts fumigatonoid B into fumigatonoid C. Finally the Fe(II)/2-oxoglutarate-dependent dioxygenase nvfF catalyzes two rounds of oxidation to transform fumigatonoid C into the end product, novofumigatonin A. This is Fumigatonoid B endoperoxide isomerase nvfE from Aspergillus novofumigatus (strain IBT 16806).